The sequence spans 206 residues: Uracil phosphoribosyltransferase (206 aa).

5-phospho-alpha-D-ribose 1-diphosphate-binding positions include R76, R101, and 128-136; that span reads DPMLATGGS. Uracil-binding positions include I191 and 196-198; that span reads GDA. 5-phospho-alpha-D-ribose 1-diphosphate is bound at residue D197.

This sequence belongs to the UPRTase family. The cofactor is Mg(2+).

The catalysed reaction is UMP + diphosphate = 5-phospho-alpha-D-ribose 1-diphosphate + uracil. It participates in pyrimidine metabolism; UMP biosynthesis via salvage pathway; UMP from uracil: step 1/1. Its activity is regulated as follows. Allosterically activated by GTP. In terms of biological role, catalyzes the conversion of uracil and 5-phospho-alpha-D-ribose 1-diphosphate (PRPP) to UMP and diphosphate. This Malacoplasma penetrans (strain HF-2) (Mycoplasma penetrans) protein is Uracil phosphoribosyltransferase.